A 252-amino-acid chain; its full sequence is MKVLNLGSKKQASFYVACELYKEMAFNQHCKLGLATGGTMTDLYEQLVKLLNKNQLNVDNVSTFNLDEYVGLTASHPQSYHYYMDDMLFKQYPYFNRKNIHIPNGDADDMNAEASKYNDVLEQQGQRDIQILGIGENGHIGFNEPGTPFDSVTHIVDLTESTIKANSRYFKNEDDVPKQAISMGLANILQAKRIILLAFGEKKRAAITHLLNQEISVDVPATLLHKHPNVEIYLDDEACPKNVAKIHVDEMD.

D67 serves as the catalytic Proton acceptor; for enolization step. N137 (for ring-opening step) is an active-site residue. Catalysis depends on H139, which acts as the Proton acceptor; for ring-opening step. The active-site For ring-opening step is E144.

Belongs to the glucosamine/galactosamine-6-phosphate isomerase family. NagB subfamily.

It carries out the reaction alpha-D-glucosamine 6-phosphate + H2O = beta-D-fructose 6-phosphate + NH4(+). Its pathway is amino-sugar metabolism; N-acetylneuraminate degradation; D-fructose 6-phosphate from N-acetylneuraminate: step 5/5. Functionally, catalyzes the reversible isomerization-deamination of glucosamine 6-phosphate (GlcN6P) to form fructose 6-phosphate (Fru6P) and ammonium ion. The chain is Glucosamine-6-phosphate deaminase from Staphylococcus aureus (strain Mu3 / ATCC 700698).